A 118-amino-acid polypeptide reads, in one-letter code: Diacylglycerol kinase (118 aa).

Residue Glu28 coordinates a divalent metal cation. The next 2 membrane-spanning stretches (helical) occupy residues 29 to 49 (TAFR…FFLG) and 55 to 75 (IILM…NSAV). Glu69 acts as the Proton acceptor in catalysis. Residue Glu76 coordinates a divalent metal cation. Residues 98–118 (SASVFIALCIVGIVWGGILFF) traverse the membrane as a helical segment.

This sequence belongs to the bacterial diacylglycerol kinase family. Mg(2+) serves as cofactor.

The protein resides in the cell inner membrane. The enzyme catalyses a 1,2-diacyl-sn-glycerol + ATP = a 1,2-diacyl-sn-glycero-3-phosphate + ADP + H(+). Catalyzes the ATP-dependent phosphorylation of sn-l,2-diacylglycerol (DAG) to phosphatidic acid. Involved in the recycling of diacylglycerol produced as a by-product during membrane-derived oligosaccharide (MDO) biosynthesis. The chain is Diacylglycerol kinase (dgkA) from Haemophilus influenzae (strain ATCC 51907 / DSM 11121 / KW20 / Rd).